The sequence spans 352 residues: Speedy protein E18 (352 aa).

Residues 1 to 12 (MDRTKTRFRKRG) show a composition bias toward basic residues. Positions 1 to 90 (MDRTKTRFRK…EPEKELAPEP (90 aa)) are disordered. Residues 16–39 (GKITTSRQPHPQNEQSLQRSTSGY) are compositionally biased toward polar residues. The segment covering 76 to 90 (DESEEEPEKELAPEP) has biased composition (acidic residues).

Belongs to the Speedy/Ringo family.

This is Speedy protein E18 from Homo sapiens (Human).